The chain runs to 671 residues: DNA ligase (671 aa).

Residues Asp-32–Asp-36, Ser-81–Leu-82, and Glu-113 contribute to the NAD(+) site. The active-site N6-AMP-lysine intermediate is Lys-115. 4 residues coordinate NAD(+): Arg-136, Glu-173, Lys-290, and Lys-314. Zn(2+) contacts are provided by Cys-408, Cys-411, Cys-426, and Cys-432. Residues Glu-593–Ser-671 enclose the BRCT domain.

Belongs to the NAD-dependent DNA ligase family. LigA subfamily. It depends on Mg(2+) as a cofactor. Mn(2+) serves as cofactor.

The catalysed reaction is NAD(+) + (deoxyribonucleotide)n-3'-hydroxyl + 5'-phospho-(deoxyribonucleotide)m = (deoxyribonucleotide)n+m + AMP + beta-nicotinamide D-nucleotide.. Functionally, DNA ligase that catalyzes the formation of phosphodiester linkages between 5'-phosphoryl and 3'-hydroxyl groups in double-stranded DNA using NAD as a coenzyme and as the energy source for the reaction. It is essential for DNA replication and repair of damaged DNA. The sequence is that of DNA ligase from Escherichia coli O81 (strain ED1a).